The following is a 162-amino-acid chain: Protein LTO1 (162 aa).

The interval 17–53 (GFLEGQNENIKQSFLEGKQYGLQVGFQRFTLLGQMEG) is deca-GX3 motif; required for interaction with YAE1 and the CIA complex.

This sequence belongs to the LTO1 family. Forms a complex with YAE1; the complex bridges the interaction between the CIA complex and RLI1. Associates with the CIA complex (via its C-terminal tryptophan).

Its subcellular location is the nucleus. Its function is as follows. Essential for life in oxygen, but nonessential under anaerobic conditions. Required for biogenesis of the large ribosomal subunit and initiation of translation in oxygen. The complex LTO1:YAE1 functions as a target specific adapter that recruits apo-RLI1 to the cytosolic iron-sulfur protein assembly (CIA) complex machinery. The polypeptide is Protein LTO1 (Saccharomyces cerevisiae (strain ATCC 204508 / S288c) (Baker's yeast)).